A 554-amino-acid chain; its full sequence is uncharacterized protein (554 aa).

Transmembrane regions (helical) follow at residues 13-31, 36-58, 73-92, 99-121, and 161-183; these read SVAH…GVYL, IFGV…HFGF, LILF…FSSF, LNLL…YYLW, and IALG…IIAI. RCK C-terminal domains lie at 199-281 and 282-366; these read KTQS…FIGK and EVEL…VLGN. 4 helical membrane-spanning segments follow: residues 376-395, 405-422, 442-464, and 468-490; these read IVTI…LPIA, LGLA…GRFG, IGIV…QTVV, and GLLY…GAIA.

This sequence belongs to the AAE transporter (TC 2.A.81) family.

Its subcellular location is the cell membrane. This is an uncharacterized protein from Bacteroides thetaiotaomicron (strain ATCC 29148 / DSM 2079 / JCM 5827 / CCUG 10774 / NCTC 10582 / VPI-5482 / E50).